We begin with the raw amino-acid sequence, 469 residues long: Ubiquitin carboxyl-terminal hydrolase MINDY-1 (469 aa).

The interval 1–85 (MEYHQPEDPA…APPGPTLGTL (85 aa)) is disordered. The segment covering 23–53 (ENHEVLAGPDEHPQDTDARDADGEAREREPA) has biased composition (basic and acidic residues). The span at 66-76 (LESPLPEASSA) shows a compositional bias: low complexity. The residue at position 103 (Ser103) is a Phosphoserine. Cys137 serves as the catalytic Nucleophile. His319 (proton acceptor) is an active-site residue. Residues 388 to 426 (QVDQDYLIALSLQQQQPRGPLGLTDLELAQQLQQEEYQQ) are ubiquitin-binding domain (UBD). Ser441 carries the phosphoserine modification. Residues 441-469 (SLQGRGATSGRPAGERRQRPKHESDCILL) are disordered. Residues 453 to 469 (AGERRQRPKHESDCILL) are compositionally biased toward basic and acidic residues.

It belongs to the MINDY deubiquitinase family. FAM63 subfamily.

The catalysed reaction is Thiol-dependent hydrolysis of ester, thioester, amide, peptide and isopeptide bonds formed by the C-terminal Gly of ubiquitin (a 76-residue protein attached to proteins as an intracellular targeting signal).. Its function is as follows. Hydrolase that can specifically remove 'Lys-48'-linked conjugated ubiquitin from proteins. Has exodeubiquitinase activity and has a preference for long polyubiquitin chains. May play a regulatory role at the level of protein turnover. The chain is Ubiquitin carboxyl-terminal hydrolase MINDY-1 from Homo sapiens (Human).